Consider the following 492-residue polypeptide: Variant surface glycoprotein MITAT 1.1 (492 aa).

A signal peptide spans 1 to 32 (MATGRAKNTKWARWLSTAGLIIVVTLPATTMA). 2 disulfides stabilise this stretch: C47–C177 and C155–C222. Residues N298 and N471 are each glycosylated (N-linked (GlcNAc...) asparagine). S475 carries the GPI-anchor amidated serine lipid modification. A propeptide spans 476-492 (NSFLIHKAPLLLAFLLF) (removed in mature form).

It localises to the cell membrane. VSG forms a coat on the surface of the parasite. The trypanosome evades the immune response of the host by expressing a series of antigenically distinct VSGs from an estimated 1000 VSG genes. The sequence is that of Variant surface glycoprotein MITAT 1.1 from Trypanosoma brucei brucei.